A 185-amino-acid polypeptide reads, in one-letter code: Cbp/p300-interacting transactivator 4 (185 aa).

2 disordered regions span residues 15-64 and 95-130; these read PRPP…VAYG and YPGR…AHAL. Positions 103–125 are enriched in pro residues; that stretch reads PGAPGGPSGPQPAPGAPAPPLQP.

This sequence belongs to the CITED family. In terms of assembly, interacts via its C-terminal region with the CH1 domain of CREBBP and EP300. Interacts with all TFAP2/AP-2 isoforms.

Its subcellular location is the nucleus. It localises to the cytoplasm. Its function is as follows. Acts as a transcriptional coactivator for TFAP2/AP-2. Enhances estrogen-dependent transactivation mediated by estrogen receptors. May function as an inhibitor of transactivation by HIF1A by disrupting HIF1A interaction with CREBBP. May be involved in regulation of gene expression during development and differentiation of blood cells, endothelial cells and mammary epithelial cells. The chain is Cbp/p300-interacting transactivator 4 (CITED4) from Bos taurus (Bovine).